The following is a 326-amino-acid chain: G-protein coupled receptor 1 (326 aa).

Serine 2 carries the post-translational modification N-acetylserine. Residues 2 to 23 (SAVLTAGGGLTAGDRSIITAIN) lie on the Extracellular side of the membrane. A helical transmembrane segment spans residues 24-44 (TGASSLSFVGSAFIVLCYCLF). Topologically, residues 45–51 (KELRKFS) are cytoplasmic. The chain crosses the membrane as a helical span at residues 52-72 (FKLVFYLALSDMLCSFFLIVG). The Extracellular segment spans residues 73 to 84 (DPSKGFICYAQG). A disulfide bond links cysteine 80 and cysteine 151. A helical membrane pass occupies residues 85–105 (YTTHFFCVASFLWTTTIAFTL). Over 106-120 (HRTVVKHKTDVEDLE) the chain is Cytoplasmic. Residues 121–141 (AMFHLYVWGTSLVVTVIRSFG) traverse the membrane as a helical segment. The Extracellular portion of the chain corresponds to 142–160 (NNHSHLGPWCWTQTGLKGK). The N-linked (GlcNAc...) asparagine glycan is linked to asparagine 143. A helical membrane pass occupies residues 161-181 (AVHFLTFYAPLWGAILYNGFT). Topologically, residues 182–213 (YFQVIRMLRNARRMAVGMSDRVDQFDNRAELK) are cytoplasmic. Residues 214–234 (VLNRWGYYPLILIGSWAFGTI) traverse the membrane as a helical segment. The Extracellular portion of the chain corresponds to 235 to 246 (NRIHDFIEPGHK). The helical transmembrane segment at 247-267 (IFWLSVLDVGTAALMGLFNSI) threads the bilayer. The Cytoplasmic segment spans residues 268–326 (AYGFNSSVRRAIHERLELFLPERLYRWLPSNFRPKNHLILHQQQQQRSEMVSLKTEDQQ).

This sequence belongs to the G-protein coupled receptor 2 family. In terms of assembly, interacts with GPA1. As to expression, mostly present in the meristematic regions. Expressed at low levels in seedlings, vascular tissues of cotyledons, hypocotyl, and roots, stems, leaves, flowering buds and siliques. In dark-grown seedlings, localized in the cotyledons and the hook.

The protein localises to the cell membrane. Together with GPA1, may regulate the cell cycle via a signaling cascade that uses phosphatidylinositol-specific phospholipase C (PI-PLC) as an effector and inositol 1,4,5-trisphosphate(IP(3)) as a second messenger. Promotes PI-PLC activity and IP(3) accumulation. Involved in the blue light (BL) signaling. Together with GPA1 and ADT3, required for BL-mediated synthesis of phenylpyruvate and subsequently of phenylalanine (Phe), in etiolated seedlings. Probably involved in cytokinin signal transduction. Plays a positive role in gibberellin- (GA) and brassinosteroid- (BR) regulated seed germination, probably independently of a heterotrimeric G-protein. Mediates seed dormancy abolition, and promotes seed germination and flowering. This chain is G-protein coupled receptor 1 (GCR1), found in Arabidopsis thaliana (Mouse-ear cress).